The sequence spans 457 residues: RuvB-like helicase 1 (457 aa).

72 to 79 lines the ATP pocket; that stretch reads GAPGTGKT.

Belongs to the RuvB family. May form heterododecamers with RVB2. Component of the SWR1 chromatin remodeling complex, the INO80 chromatin remodeling complex, and of the R2TP complex.

The protein resides in the nucleus. The catalysed reaction is ATP + H2O = ADP + phosphate + H(+). DNA helicase which participates in several chromatin remodeling complexes, including the SWR1 and the INO80 complexes. The SWR1 complex mediates the ATP-dependent exchange of histone H2A for the H2A variant HZT1 leading to transcriptional regulation of selected genes by chromatin remodeling. The INO80 complex remodels chromatin by shifting nucleosomes and is involved in DNA repair. Also involved in pre-rRNA processing. The sequence is that of RuvB-like helicase 1 (RBV1) from Debaryomyces hansenii (strain ATCC 36239 / CBS 767 / BCRC 21394 / JCM 1990 / NBRC 0083 / IGC 2968) (Yeast).